Consider the following 374-residue polypeptide: 5-hydroxytryptamine receptor 1D (374 aa).

3 N-linked (GlcNAc...) asparagine glycosylation sites follow: Asn-5, Asn-17, and Asn-21. The next 3 helical transmembrane spans lie at 36-61 (ISLVVVLSIITLATVLSNAFVLTTIL), 73-94 (LIGSLATTDLLVSILVMPISIA), and 107-131 (LCDIWVSSDITCCTASILHLCVIAL). Residues Cys-108 and Cys-185 are joined by a disulfide bond. Serotonin is bound by residues Asp-115 and Cys-119. Positions 132–134 (DRY) match the DRY motif; important for ligand-induced conformation changes motif. Transmembrane regions (helical) follow at residues 152–173 (AAAMIAAVWAISICISIPPLFW), 192–215 (ISYTIYSTCGAFYIPSILLIILYG), 298–323 (KTLGIILGAFIICWLPFFVVSLVLPI), and 333–356 (ALFDFFTWLGYLNSLINPVIYTVF). Ser-318 serves as a coordination point for serotonin. Positions 349-353 (NPVIY) match the NPxxY motif; important for ligand-induced conformation changes and signaling motif.

This sequence belongs to the G-protein coupled receptor 1 family. In terms of assembly, homodimer. Heterodimer with HTR1B. In terms of tissue distribution, detected in dorsal raphe.

It localises to the cell membrane. Functionally, G-protein coupled receptor for 5-hydroxytryptamine (serotonin). Also functions as a receptor for ergot alkaloid derivatives, various anxiolytic and antidepressant drugs and other psychoactive substances. Ligand binding causes a conformation change that triggers signaling via guanine nucleotide-binding proteins (G proteins) and modulates the activity of downstream effectors, such as adenylate cyclase. HTR1D is coupled to G(i)/G(o) G alpha proteins and mediates inhibitory neurotransmission by inhibiting adenylate cyclase activity. Regulates the release of 5-hydroxytryptamine in the brain, and thereby affects neural activity. May also play a role in regulating the release of other neurotransmitters. May play a role in vasoconstriction. This is 5-hydroxytryptamine receptor 1D (Htr1d) from Rattus norvegicus (Rat).